A 99-amino-acid polypeptide reads, in one-letter code: Large ribosomal subunit protein uL23 (99 aa).

This sequence belongs to the universal ribosomal protein uL23 family. In terms of assembly, part of the 50S ribosomal subunit. Contacts protein L29, and trigger factor when it is bound to the ribosome.

Its function is as follows. One of the early assembly proteins it binds 23S rRNA. One of the proteins that surrounds the polypeptide exit tunnel on the outside of the ribosome. Forms the main docking site for trigger factor binding to the ribosome. This Stutzerimonas stutzeri (strain A1501) (Pseudomonas stutzeri) protein is Large ribosomal subunit protein uL23.